Reading from the N-terminus, the 223-residue chain is DNA-directed RNA polymerase III subunit RPC7 (223 aa).

The span at 111-124 (MMPRKKCKKGDPKS) shows a compositional bias: basic and acidic residues. The interval 111 to 223 (MMPRKKCKKG…SDDNMDEATY (113 aa)) is disordered. The residue at position 134 (Thr-134) is a Phosphothreonine. Positions 144 to 156 (KTIEELEKRGEGE) are enriched in basic and acidic residues. Position 158 is a phosphoserine (Ser-158). 2 stretches are compositionally biased toward acidic residues: residues 173 to 198 (KDDEEDGEEDAEQEDYDEEEQEEEND) and 206 to 223 (NGDDFGVDSDDNMDEATY).

The protein belongs to the eukaryotic RPC7 RNA polymerase subunit family. In terms of assembly, component of the RNA polymerase III complex consisting of 17 subunits: a ten-subunit horseshoe-shaped catalytic core composed of POLR3A/RPC1, POLR3B/RPC2, POLR1C/RPAC1, POLR1D/RPAC2, POLR3K/RPC10, POLR2E/RPABC1, POLR2F/RPABC2, POLR2H/RPABC3, POLR2K/RPABC4 and POLR2L/RPABC5; a mobile stalk composed of two subunits POLR3H/RPC8 and CRCP/RPC9, protruding from the core and functioning primarily in transcription initiation; and additional subunits homologous to general transcription factors of the RNA polymerase II machinery, POLR3C/RPC3-POLR3F/RPC6-POLR3G/RPC7 heterotrimer required for transcription initiation and POLR3D/RPC4-POLR3E/RPC5 heterodimer involved in both transcription initiation and termination. Directly interacts with POLR3C/RPC62. Also found in a trimeric complex with POLR3C/RPC3 and POLR3GL. As to expression, expressed at low levels in the liver.

The protein resides in the nucleus. Its subcellular location is the cytoplasm. Its function is as follows. DNA-dependent RNA polymerase catalyzes the transcription of DNA into RNA using the four ribonucleoside triphosphates as substrates. Specific peripheric component of RNA polymerase III (Pol III) which synthesizes small non-coding RNAs including 5S rRNA, snRNAs, tRNAs and miRNAs from at least 500 distinct genomic loci. Acts as a long tether that bridges POLR3C/RPC3-POLR3F/RPC6-POLR3G/RPC7 heterotrimer and the mobile stalk of Pol III, coordinating the dynamics of Pol III stalk and clamp modules during the transition from apo to elongation state. Pol III exists as two alternative complexes defined by the mutually exclusive incorporation of subunit POLR3G/RPC7alpha or POLR3GL/RPC7beta. POLR3G/RPC7alpha modulates Pol III transcriptome by specifically enhancing the transcription of snaR-A non-coding RNAs. At resting state, occupies the active site of apo Pol III and keeps Pol III in an autoinhibitory mode, preventing non-specific transcription. Pol III plays a key role in sensing and limiting infection by intracellular bacteria and DNA viruses. Acts as a nuclear and cytosolic DNA sensor involved in innate immune response. Can sense non-self dsDNA that serves as template for transcription into dsRNA. The non-self RNA polymerase III transcripts, such as Epstein-Barr virus-encoded RNAs (EBERs), induce type I interferon and NF-kappa-B through the RIG-I pathway. The sequence is that of DNA-directed RNA polymerase III subunit RPC7 (Polr3g) from Mus musculus (Mouse).